Consider the following 158-residue polypeptide: Putative cTAGE family member 3 (158 aa).

Residues 26-96 (QLQESQKQLL…AAVLEEDITD (71 aa)) are a coiled coil.

The protein belongs to the cTAGE family. In terms of tissue distribution, expressed in normal tissues including colon, mammary gland, ovary, placenta, stomach and testis, as well as several fetal tissues.

Tumor-associated antigen. This is Putative cTAGE family member 3 (CTAGE3P) from Homo sapiens (Human).